The following is a 1820-amino-acid chain: Histone-lysine N-methyltransferase, H3 lysine-9 specific (1820 aa).

Disordered stretches follow at residues 1-54 (MPGA…TSMR), 74-251 (NLLP…TPVT), 284-618 (SLSD…APTK), 634-681 (SSER…KKAV), 804-836 (NVDD…SLSK), 850-893 (SSTL…VNSW), 911-944 (HAKK…EQLR), 966-996 (DVES…STDA), 1063-1126 (PLSV…NGAV), 1183-1270 (RYAV…DRTA), 1296-1335 (KASA…TSQQ), and 1385-1407 (RSEP…TDSD). Residues 11–31 (VDNPLVLDSSDSDDNLSGLPL) are compositionally biased toward low complexity. The segment covering 109–129 (ADSSSPPENQNVISFLGNHSQ) has biased composition (polar residues). Low complexity predominate over residues 152–169 (GGENIAGQNNEANAAQAA). Polar residues-rich tracts occupy residues 174–204 (GTPS…SAIN) and 212–222 (SIPQQSPSSRA). 3 stretches are compositionally biased toward low complexity: residues 226–236 (RSASIASSRSR), 284–311 (SLSD…TSTT), and 339–352 (TPAT…GPSA). The span at 361–370 (KSSDQKESPR) shows a compositional bias: basic and acidic residues. A compositionally biased stretch (polar residues) spans 374–385 (SKQPSSPSSTHG). The segment covering 400 to 424 (SATSGKSSAASSRSKSRAPLSSRAA) has biased composition (low complexity). A compositionally biased stretch (polar residues) spans 433–442 (SKTTSVSSTH). A compositionally biased stretch (low complexity) spans 443 to 459 (PPSRASPSSLPSQSQRQ). Over residues 479-510 (TLSSGTGQSTPSKFSLPTSDVASNQKNKSTGL) the composition is skewed to polar residues. Composition is skewed to low complexity over residues 514-531 (PKKP…RTST), 551-563 (QSSS…IQTS), and 594-618 (TKAT…APTK). Polar residues-rich tracts occupy residues 643–662 (GKSQ…TAAS) and 810–827 (SAQP…SVSS). Positions 850–861 (SSTLGDSVSGLG) are enriched in low complexity. Residues 869–893 (TQSMPQSPLPTTNTNNSSGIEVNSW) show a composition bias toward polar residues. 2 stretches are compositionally biased toward basic and acidic residues: residues 917–944 (KERE…EQLR) and 966–983 (DVES…ETRK). The segment covering 1076–1089 (SSSSTSTPSLLSRS) has biased composition (low complexity). Over residues 1296–1320 (KASAVSPVPSANRPSPAPSAKADLL) the composition is skewed to low complexity. Residues 1516 to 1585 (LGCDCDGPCD…ECMNRVIQRG (70 aa)) form the Pre-SET domain. Residues Cys-1518, Cys-1520, Cys-1524, Cys-1531, Cys-1533, Cys-1567, Cys-1571, Cys-1573, and Cys-1577 each coordinate Zn(2+). Residues 1590 to 1750 (TGIEIFKTKE…KHEELCISYK (161 aa)) enclose the SET domain. S-adenosyl-L-methionine contacts are provided by residues 1600 to 1602 (KGW), Tyr-1643, Arg-1704, and 1707 to 1708 (NH). Cys-1710 contributes to the Zn(2+) binding site. Residues 1756-1794 (DDIPSPEPVKKKKGGKGKKQMSKTSASAHPPEMTALNSD) are disordered. A compositionally biased stretch (basic residues) spans 1765–1776 (KKKKGGKGKKQM). The 17-residue stretch at 1800–1816 (VKDICRCGAKNCDGRMF) folds into the Post-SET domain. Zn(2+) is bound by residues Cys-1804, Cys-1806, and Cys-1811.

Belongs to the class V-like SAM-binding methyltransferase superfamily. Histone-lysine methyltransferase family. Suvar3-9 subfamily.

It is found in the nucleus. The protein localises to the chromosome. The enzyme catalyses N(6)-methyl-L-lysyl(9)-[histone H3] + S-adenosyl-L-methionine = N(6),N(6)-dimethyl-L-lysyl(9)-[histone H3] + S-adenosyl-L-homocysteine + H(+). The catalysed reaction is L-lysyl(9)-[histone H3] + S-adenosyl-L-methionine = N(6)-methyl-L-lysyl(9)-[histone H3] + S-adenosyl-L-homocysteine + H(+). Its function is as follows. Histone methyltransferase that specifically dimethylates histone H3 to form H3K9me2. H3K9me2 represents a specific tag for epigenetic transcriptional repression by recruiting HP1 proteins to methylated histones. Mainly functions in heterochromatin regions, thereby playing a central role in the establishment of constitutive heterochromatin at centromeric regions. This is Histone-lysine N-methyltransferase, H3 lysine-9 specific from Cryptococcus neoformans var. grubii serotype A (strain H99 / ATCC 208821 / CBS 10515 / FGSC 9487) (Filobasidiella neoformans var. grubii).